Reading from the N-terminus, the 343-residue chain is UPF0284 protein Msed_0735 (343 aa).

Belongs to the UPF0284 family.

This is UPF0284 protein Msed_0735 from Metallosphaera sedula (strain ATCC 51363 / DSM 5348 / JCM 9185 / NBRC 15509 / TH2).